Reading from the N-terminus, the 232-residue chain is MEQGKKETPTVYLHDIKREYTQGETRLTILDSTKLALWAGQSVALVAPSGSGKSTLLHIAGLLESPDAGEVYIGGIATSGLSDVERTQIRRTDIGFVYQSHRLLPEFTALENVMLPQMIRGLKRAETVKRAQEILAYLGLEDRVTHRPAELSGGEQQRVAIARAVANAPRVLLADEPTGNLDPQTADHVFNALMQLVKATRVSMLIATHNMELADRMDRRVSLENGHVVELD.

The region spanning 11–231 (VYLHDIKREY…SLENGHVVEL (221 aa)) is the ABC transporter domain. 47 to 54 (APSGSGKS) contacts ATP.

This sequence belongs to the ABC transporter superfamily. Lipoprotein translocase (TC 3.A.1.125) family. In terms of assembly, the complex is composed of two ATP-binding proteins (LolD) and two transmembrane proteins (LolC and LolE).

It is found in the cell inner membrane. Its function is as follows. Part of the ABC transporter complex LolCDE involved in the translocation of mature outer membrane-directed lipoproteins, from the inner membrane to the periplasmic chaperone, LolA. Responsible for the formation of the LolA-lipoprotein complex in an ATP-dependent manner. This chain is Lipoprotein-releasing system ATP-binding protein LolD, found in Nitrobacter winogradskyi (strain ATCC 25391 / DSM 10237 / CIP 104748 / NCIMB 11846 / Nb-255).